The following is a 460-amino-acid chain: tRNA(Ile)-lysidine synthase (460 aa).

30–35 provides a ligand contact to ATP; that stretch reads SGGLDS.

The protein belongs to the tRNA(Ile)-lysidine synthase family.

Its subcellular location is the cytoplasm. It carries out the reaction cytidine(34) in tRNA(Ile2) + L-lysine + ATP = lysidine(34) in tRNA(Ile2) + AMP + diphosphate + H(+). Its function is as follows. Ligates lysine onto the cytidine present at position 34 of the AUA codon-specific tRNA(Ile) that contains the anticodon CAU, in an ATP-dependent manner. Cytidine is converted to lysidine, thus changing the amino acid specificity of the tRNA from methionine to isoleucine. This is tRNA(Ile)-lysidine synthase from Yersinia pseudotuberculosis serotype I (strain IP32953).